A 331-amino-acid chain; its full sequence is Cysteine and histidine-rich domain-containing protein 1 (331 aa).

An N-acetylalanine modification is found at A2. The tract at residues 2-77 (ALLCYNRGCG…KPPEPVKPEV (76 aa)) is interaction with PPP5C. Residues C5, C10, C24, H27, C42, and C43 each contribute to the Zn(2+) site. CHORD domains follow at residues 5-64 (CYNR…KGRH) and 157-216 (CKNG…RGKH). A Phosphothreonine modification is found at T47. S51 carries the post-translational modification Phosphoserine. Residues C59, H64, C157, C162, C176, H179, C194, C195, C211, and H216 each coordinate Zn(2+). Positions 62–82 (GRHNSEKPPEPVKPEVKTTEK) are disordered. Over residues 64–82 (HNSEKPPEPVKPEVKTTEK) the composition is skewed to basic and acidic residues. The tract at residues 65 to 316 (NSEKPPEPVK…AEPMQWASLE (252 aa)) is interaction with HSP90AA1 and HSP90AB1. Residues 227-316 (VVPCRHDWHQ…AEPMQWASLE (90 aa)) form the CS domain.

As to quaternary structure, interacts with HSP90AA1, HSP90AB1, PPP5C, ROCK1 and ROCK2.

Its function is as follows. Regulates centrosome duplication, probably by inhibiting the kinase activity of ROCK2. Proposed to act as co-chaperone for HSP90. May play a role in the regulation of NOD1 via a HSP90 chaperone complex. In vitro, has intrinsic chaperone activity. This function may be achieved by inhibiting association of ROCK2 with NPM1. Plays a role in ensuring the localization of the tyrosine kinase receptor EGFR to the plasma membrane, and thus ensures the subsequent regulation of EGFR activity and EGF-induced actin cytoskeleton remodeling. Involved in stress response. Prevents tumorigenesis. The polypeptide is Cysteine and histidine-rich domain-containing protein 1 (Chordc1) (Rattus norvegicus (Rat)).